Reading from the N-terminus, the 307-residue chain is Pantothenate kinase (307 aa).

90 to 97 (GSVAVGKS) is a binding site for ATP.

It belongs to the prokaryotic pantothenate kinase family.

Its subcellular location is the cytoplasm. It carries out the reaction (R)-pantothenate + ATP = (R)-4'-phosphopantothenate + ADP + H(+). It participates in cofactor biosynthesis; coenzyme A biosynthesis; CoA from (R)-pantothenate: step 1/5. The chain is Pantothenate kinase from Limosilactobacillus reuteri subsp. reuteri (strain JCM 1112) (Lactobacillus reuteri).